The following is a 627-amino-acid chain: (+)-3-carene synthase 1, chloroplastic (627 aa).

Residues 1-36 constitute a chloroplast transit peptide; that stretch reads MSVISIVPLASKPCLYKSFISSTHEPKALRRPISTV. Residues aspartate 378, aspartate 382, and aspartate 530 each coordinate Mg(2+). Residues 378 to 382 carry the DDXXD motif motif; the sequence is DDMYD.

The protein belongs to the terpene synthase family. Tpsd subfamily. Requires Mg(2+) as cofactor. It depends on Mn(2+) as a cofactor.

Its subcellular location is the plastid. It is found in the chloroplast. It catalyses the reaction (2E)-geranyl diphosphate = (+)-car-3-ene + diphosphate. It functions in the pathway terpene metabolism; oleoresin biosynthesis. Its function is as follows. Terpene synthase (TPS) involved in the biosynthesis of monoterpene natural products included in conifer oleoresin secretions and volatile emissions; these compounds contribute to biotic and abiotic stress defense against herbivores (e.g. insect attack by white pine weevil P.strobi) and pathogens. Catalyzes the conversion of (2E)-geranyl diphosphate (GPP) to (+)-car-3-ene. This chain is (+)-3-carene synthase 1, chloroplastic, found in Picea sitchensis (Sitka spruce).